The sequence spans 480 residues: Proline--tRNA ligase (480 aa).

It belongs to the class-II aminoacyl-tRNA synthetase family. ProS type 3 subfamily. Homodimer.

It localises to the cytoplasm. It catalyses the reaction tRNA(Pro) + L-proline + ATP = L-prolyl-tRNA(Pro) + AMP + diphosphate. In terms of biological role, catalyzes the attachment of proline to tRNA(Pro) in a two-step reaction: proline is first activated by ATP to form Pro-AMP and then transferred to the acceptor end of tRNA(Pro). The protein is Proline--tRNA ligase of Methanosarcina mazei (strain ATCC BAA-159 / DSM 3647 / Goe1 / Go1 / JCM 11833 / OCM 88) (Methanosarcina frisia).